An 84-amino-acid chain; its full sequence is Large ribosomal subunit protein bL27 (84 aa).

Positions 1 to 22 are disordered; sequence MAHKKAGGSTRNGRDSESKRLG.

The protein belongs to the bacterial ribosomal protein bL27 family.

The chain is Large ribosomal subunit protein bL27 from Shewanella denitrificans (strain OS217 / ATCC BAA-1090 / DSM 15013).